A 617-amino-acid polypeptide reads, in one-letter code: Melatonin-related receptor (617 aa).

Residues 1-30 lie on the Extracellular side of the membrane; it reads MGPTLAVPTPYGCIGCKLPQPEYPPALIIF. The helical transmembrane segment at 31 to 51 threads the bilayer; that stretch reads MFCAMVITIVVDLIGNSMVIL. Over 52–64 the chain is Cytoplasmic; that stretch reads AVTKNKKLRNSGN. The chain crosses the membrane as a helical span at residues 65-85; that stretch reads IFVVSLSVADMLVAIYPYPLM. The Extracellular segment spans residues 86 to 103; it reads LHAMSIGGWDLSQLQCQM. An intrachain disulfide couples Cys101 to Cys178. Residues 104 to 124 traverse the membrane as a helical segment; sequence VGFITGLSVVGSIFNIVAIAI. Topologically, residues 125-143 are cytoplasmic; that stretch reads NRYCYICHSLQYERIFSVR. Residues 144–164 form a helical membrane-spanning segment; sequence NTCIYLVITWIMTVLAVLPNM. At 165–188 the chain is on the extracellular side; the sequence is YIGTIEYDPRTYTCIFNYLNNPVF. The helical transmembrane segment at 189–209 threads the bilayer; it reads TVTIVCIHFVLPLLIVGFCYV. The Cytoplasmic portion of the chain corresponds to 210 to 239; sequence RIWTKVLAARDPAGQNPDNQLAEVRNFLTM. The chain crosses the membrane as a helical span at residues 240-260; that stretch reads FVIFLLFAVCWCPINVLTVLV. Over 261 to 273 the chain is Extracellular; the sequence is AVSPKEMAGKIPN. A helical membrane pass occupies residues 274-294; sequence WLYLAAYFIAYFNSCLNAVIY. At 295-617 the chain is on the cytoplasmic side; it reads GLLNENFRRE…VEDDPDEMAV (323 aa). Disordered stretches follow at residues 340–438 and 464–596; these read AHAR…ATVY and SVHF…VTTS. Basic and acidic residues predominate over residues 341–353; it reads HARDQAREQDRAH. A compositionally biased stretch (polar residues) spans 485 to 500; it reads GSHSKSAFSAATSHPK.

The protein belongs to the G-protein coupled receptor 1 family. In terms of assembly, homodimer, and heterodimer with MTNR1A and MTNR1B. Interacts with KAT5. Interacts with RTN4 isoform A/NOGO-A. Interacts with TGFBR1. As to quaternary structure, interacts with GTF2I. Post-translationally, cleaved by CAPN1 in a calcium-dependent manner. Hypothalamus and pituitary.

The protein localises to the cell membrane. The protein resides in the postsynaptic density. Its subcellular location is the nucleus. Functionally, g protein-coupled receptor that plays a role in numerous physiological processes including regulation of energy metabolism, neurite outgrowth or cell migration. Promotes self-renewal and neuronal differentiation of neural progenitor cells through activation of the NOTCH and WNT/beta-catenin signaling pathways. Modulates the KAT5-dependent glucocorticoid receptor signaling by modulating KAT5 subcellular compartmentalisation. Also plays a role in the activation TGFBR1 in the absence of TGFBR2 by interfering with FKBP1A binding to TGFBR1, leading to induction of both canonical and non-canonical SMAD signaling pathways resulting in inhibition of proliferation or promotion of migration. Upon cleavage by CAPN1, functions as a scaffold in the nucleus for interacting partners such as GTF2I to promote FOS promoter activation. In Homo sapiens (Human), this protein is Melatonin-related receptor (GPR50).